The sequence spans 232 residues: 6-phosphogluconolactonase (232 aa).

Belongs to the glucosamine/galactosamine-6-phosphate isomerase family. 6-phosphogluconolactonase subfamily.

The catalysed reaction is 6-phospho-D-glucono-1,5-lactone + H2O = 6-phospho-D-gluconate + H(+). Its pathway is carbohydrate degradation; pentose phosphate pathway; D-ribulose 5-phosphate from D-glucose 6-phosphate (oxidative stage): step 2/3. Its function is as follows. Hydrolysis of 6-phosphogluconolactone to 6-phosphogluconate. The sequence is that of 6-phosphogluconolactonase (pgl) from Caulobacter vibrioides (strain ATCC 19089 / CIP 103742 / CB 15) (Caulobacter crescentus).